We begin with the raw amino-acid sequence, 293 residues long: Glycerophosphodiester phosphodiesterase (293 aa).

An N-terminal signal peptide occupies residues 1 to 26 (MRKNRILALFVLSLGLLSFMVTPVSA). A GP-PDE domain is found at 38–290 (ILTVAHRGAS…NYPDLFHKVK (253 aa)). The active-site Proton acceptor is His-43. Residues His-43, Arg-44, and Glu-70 each coordinate sn-glycerol 3-phosphate. 2 residues coordinate Ca(2+): Glu-70 and Asp-72. Residues His-85, Glu-152, and Gln-188 each coordinate sn-glycerol 3-phosphate. His-85 functions as the Proton donor in the catalytic mechanism. Glu-152 provides a ligand contact to Ca(2+).

This sequence belongs to the glycerophosphoryl diester phosphodiesterase family. Requires Ca(2+) as cofactor.

The protein localises to the secreted. It catalyses the reaction a sn-glycero-3-phosphodiester + H2O = an alcohol + sn-glycerol 3-phosphate + H(+). Glycerophosphodiester phosphodiesterase hydrolyzes glycerophosphodiesters into glycerol-3-phosphate (G3P) and the corresponding alcohol. Involved in wall teichoic acid (WTA) metabolism during phosphate starvation. Catalyzes the degradation of WTA, enabling the utilization of WTA as a phosphate reserve under limiting conditions. Is highly selective for the poly(gylcerol phosphate) WTA backbone and catalyzes exolytic cleavage of individual monomer units. In vitro is active toward the WTA oligomer mimics glycerophosphoglycerol (GPG) and bis-glycerophosphoglycerol (bGPG). This Bacillus subtilis (strain 168) protein is Glycerophosphodiester phosphodiesterase.